A 283-amino-acid chain; its full sequence is 4-hydroxy-3-methylbut-2-enyl diphosphate reductase (283 aa).

Residue Cys12 participates in [4Fe-4S] cluster binding. His40 and His72 together coordinate (2E)-4-hydroxy-3-methylbut-2-enyl diphosphate. Dimethylallyl diphosphate contacts are provided by His40 and His72. Isopentenyl diphosphate is bound by residues His40 and His72. Cys94 lines the [4Fe-4S] cluster pocket. His122 serves as a coordination point for (2E)-4-hydroxy-3-methylbut-2-enyl diphosphate. His122 contributes to the dimethylallyl diphosphate binding site. Position 122 (His122) interacts with isopentenyl diphosphate. Residue Glu124 is the Proton donor of the active site. Residue Thr160 participates in (2E)-4-hydroxy-3-methylbut-2-enyl diphosphate binding. [4Fe-4S] cluster is bound at residue Cys188. 3 residues coordinate (2E)-4-hydroxy-3-methylbut-2-enyl diphosphate: Ser216, Asn218, and Ser259. Dimethylallyl diphosphate contacts are provided by Ser216, Asn218, and Ser259. The isopentenyl diphosphate site is built by Ser216, Asn218, and Ser259.

This sequence belongs to the IspH family. Requires [4Fe-4S] cluster as cofactor.

It carries out the reaction isopentenyl diphosphate + 2 oxidized [2Fe-2S]-[ferredoxin] + H2O = (2E)-4-hydroxy-3-methylbut-2-enyl diphosphate + 2 reduced [2Fe-2S]-[ferredoxin] + 2 H(+). It catalyses the reaction dimethylallyl diphosphate + 2 oxidized [2Fe-2S]-[ferredoxin] + H2O = (2E)-4-hydroxy-3-methylbut-2-enyl diphosphate + 2 reduced [2Fe-2S]-[ferredoxin] + 2 H(+). It participates in isoprenoid biosynthesis; dimethylallyl diphosphate biosynthesis; dimethylallyl diphosphate from (2E)-4-hydroxy-3-methylbutenyl diphosphate: step 1/1. The protein operates within isoprenoid biosynthesis; isopentenyl diphosphate biosynthesis via DXP pathway; isopentenyl diphosphate from 1-deoxy-D-xylulose 5-phosphate: step 6/6. In terms of biological role, catalyzes the conversion of 1-hydroxy-2-methyl-2-(E)-butenyl 4-diphosphate (HMBPP) into a mixture of isopentenyl diphosphate (IPP) and dimethylallyl diphosphate (DMAPP). Acts in the terminal step of the DOXP/MEP pathway for isoprenoid precursor biosynthesis. This Dictyoglomus turgidum (strain DSM 6724 / Z-1310) protein is 4-hydroxy-3-methylbut-2-enyl diphosphate reductase.